The chain runs to 437 residues: Probable E3 ubiquitin-protein ligase TRIML2 (437 aa).

The segment at 14 to 55 (TEDAYCETHLEPTRLFCDVDQITLCSKCFQSQEHKHHMVCGI) adopts a B box-type zinc-finger fold. Zn(2+)-binding residues include Cys-19, His-22, Cys-41, and His-47. Residues 55–200 (IQEAAENYRK…IVELEKKCGE (146 aa)) adopt a coiled-coil conformation. The B30.2/SPRY domain occupies 231 to 429 (DLSLCHIRGL…DSLTILQHGP (199 aa)).

It carries out the reaction S-ubiquitinyl-[E2 ubiquitin-conjugating enzyme]-L-cysteine + [acceptor protein]-L-lysine = [E2 ubiquitin-conjugating enzyme]-L-cysteine + N(6)-ubiquitinyl-[acceptor protein]-L-lysine.. Its pathway is protein modification; protein ubiquitination. The sequence is that of Probable E3 ubiquitin-protein ligase TRIML2 from Homo sapiens (Human).